Reading from the N-terminus, the 371-residue chain is Chaperone protein DnaJ (371 aa).

In terms of domain architecture, J spans 5-69 (DYYEVLGLSK…QKRAQYDQFG (65 aa)). The CR-type zinc-finger motif lies at 133–215 (GKELNVEIPV…CHGSGKVRKR (83 aa)). Residues Cys-146, Cys-149, Cys-163, Cys-166, Cys-189, Cys-192, Cys-203, and Cys-206 each coordinate Zn(2+). CXXCXGXG motif repeat units lie at residues 146-153 (CDTCKGSG), 163-170 (CKHCSGSG), 189-196 (CSHCSGTG), and 203-210 (CTTCHGSG).

The protein belongs to the DnaJ family. Homodimer. The cofactor is Zn(2+).

Its subcellular location is the cytoplasm. In terms of biological role, participates actively in the response to hyperosmotic and heat shock by preventing the aggregation of stress-denatured proteins and by disaggregating proteins, also in an autonomous, DnaK-independent fashion. Unfolded proteins bind initially to DnaJ; upon interaction with the DnaJ-bound protein, DnaK hydrolyzes its bound ATP, resulting in the formation of a stable complex. GrpE releases ADP from DnaK; ATP binding to DnaK triggers the release of the substrate protein, thus completing the reaction cycle. Several rounds of ATP-dependent interactions between DnaJ, DnaK and GrpE are required for fully efficient folding. Also involved, together with DnaK and GrpE, in the DNA replication of plasmids through activation of initiation proteins. The polypeptide is Chaperone protein DnaJ (Bacillus anthracis (strain A0248)).